The following is a 602-amino-acid chain: Elongation factor 4 (602 aa).

Positions 6 to 188 (DRIRNFCIIA…RIVTRIPPPG (183 aa)) constitute a tr-type G domain. GTP-binding positions include 18 to 23 (DHGKST) and 135 to 138 (NKID).

The protein belongs to the TRAFAC class translation factor GTPase superfamily. Classic translation factor GTPase family. LepA subfamily.

It is found in the cell membrane. The catalysed reaction is GTP + H2O = GDP + phosphate + H(+). In terms of biological role, required for accurate and efficient protein synthesis under certain stress conditions. May act as a fidelity factor of the translation reaction, by catalyzing a one-codon backward translocation of tRNAs on improperly translocated ribosomes. Back-translocation proceeds from a post-translocation (POST) complex to a pre-translocation (PRE) complex, thus giving elongation factor G a second chance to translocate the tRNAs correctly. Binds to ribosomes in a GTP-dependent manner. This is Elongation factor 4 from Pelotomaculum thermopropionicum (strain DSM 13744 / JCM 10971 / SI).